We begin with the raw amino-acid sequence, 508 residues long: MGLPWYRVHTVVLNDPGRLIAVHLMHTALVAGWAGSMALYELAIFDPSDAVLNPMWRQGMFVLPFMARLGVTQSWGGWSITGETAVDPGYWSFEGVAIAHIVLSGLLFLAAVWHWVYWDLELFTDPRTGEPALDLPKMFGIHLFLSGLLCFGFGAFHLSGLWGPGMWVSDPYGLTGHVQPVAPAWGPEGFNPFNPGGIVAHHIAAGVVGIVAGLFHLTVRPPERLYKALRMGNIETVLSSSLAAVFFAAFVVAGTMWYGNAATPVELFGPTRYQWDQGYFRQEIARRVDTAVASGASLEEAWSSIPEKLAFYDYVGNSPAKGGLFRTGQMNKGDGIAQGWLGHAVFKDKNGDVLDVRRLPNFFENFPIVLTDSKGAVRADIPFRRAEAKFSFEETGITASFYGGSLNGQTITDPAQVKKYARKAQLGEAFEFDTETLNSDGVFRTSPRGWFTFGHASFALLFFFGHIWHGSRTLFRDVFAGIEADLGEQIEFGAFQKLGDPTTRKTAA.

The next 6 membrane-spanning stretches (helical) occupy residues alanine 21 to serine 36, isoleucine 101 to tryptophan 115, glycine 140 to phenylalanine 156, isoleucine 203 to threonine 218, valine 237 to valine 252, and serine 457 to arginine 472.

Belongs to the PsbB/PsbC family. PsbB subfamily. PSII is composed of 1 copy each of membrane proteins PsbA, PsbB, PsbC, PsbD, PsbE, PsbF, PsbH, PsbI, PsbJ, PsbK, PsbL, PsbM, PsbT, PsbX, PsbY, PsbZ, Psb30/Ycf12, peripheral proteins PsbO, CyanoQ (PsbQ), PsbU, PsbV and a large number of cofactors. It forms dimeric complexes. Binds multiple chlorophylls. PSII binds additional chlorophylls, carotenoids and specific lipids. serves as cofactor.

The protein resides in the cellular thylakoid membrane. Functionally, one of the components of the core complex of photosystem II (PSII). It binds chlorophyll and helps catalyze the primary light-induced photochemical processes of PSII. PSII is a light-driven water:plastoquinone oxidoreductase, using light energy to abstract electrons from H(2)O, generating O(2) and a proton gradient subsequently used for ATP formation. This is Photosystem II CP47 reaction center protein from Synechococcus elongatus (strain ATCC 33912 / PCC 7942 / FACHB-805) (Anacystis nidulans R2).